Here is a 511-residue protein sequence, read N- to C-terminus: 2-isopropylmalate synthase (511 aa).

Residues 6-269 (IIIFDTTLRD…YTDIKCENIS (264 aa)) enclose the Pyruvate carboxyltransferase domain. Mn(2+) is bound by residues Asp-15, His-203, His-205, and Asn-239. A regulatory domain region spans residues 394–511 (VLEKLSVISG…SLKVEERKMA (118 aa)).

The protein belongs to the alpha-IPM synthase/homocitrate synthase family. LeuA type 1 subfamily. In terms of assembly, homodimer. Mn(2+) serves as cofactor.

Its subcellular location is the cytoplasm. The catalysed reaction is 3-methyl-2-oxobutanoate + acetyl-CoA + H2O = (2S)-2-isopropylmalate + CoA + H(+). The protein operates within amino-acid biosynthesis; L-leucine biosynthesis; L-leucine from 3-methyl-2-oxobutanoate: step 1/4. Its function is as follows. Catalyzes the condensation of the acetyl group of acetyl-CoA with 3-methyl-2-oxobutanoate (2-ketoisovalerate) to form 3-carboxy-3-hydroxy-4-methylpentanoate (2-isopropylmalate). This is 2-isopropylmalate synthase from Campylobacter jejuni subsp. doylei (strain ATCC BAA-1458 / RM4099 / 269.97).